The chain runs to 147 residues: Hemoglobin subunit beta (147 aa).

Residue V2 is modified to N-acetylvaline. The Globin domain maps to 3–147 (HLTGEEKSAV…VANALAHKYH (145 aa)). T13 carries the phosphothreonine modification. S45 carries the post-translational modification Phosphoserine. K60 carries the N6-acetyllysine modification. H64 lines the heme b pocket. N6-acetyllysine is present on K83. H93 provides a ligand contact to heme b. At C94 the chain carries S-nitrosocysteine. K145 bears the N6-acetyllysine mark.

It belongs to the globin family. Heterotetramer of two alpha chains and two beta chains. In terms of tissue distribution, red blood cells.

Involved in oxygen transport from the lung to the various peripheral tissues. This Callimico goeldii (Goeldi's marmoset) protein is Hemoglobin subunit beta (HBB).